A 27-amino-acid chain; its full sequence is Caerulein precursor fragment R2 (27 aa).

Expressed by the skin glands.

Its subcellular location is the secreted. Antimicrobial peptide. The polypeptide is Caerulein precursor fragment R2 (Xenopus ruwenzoriensis (Uganda clawed frog)).